Consider the following 446-residue polypeptide: Phosphoglucosamine mutase (446 aa).

Ser99 functions as the Phosphoserine intermediate in the catalytic mechanism. Ser99, Asp242, Asp244, and Asp246 together coordinate Mg(2+). Ser99 bears the Phosphoserine mark.

This sequence belongs to the phosphohexose mutase family. Requires Mg(2+) as cofactor. Activated by phosphorylation.

The catalysed reaction is alpha-D-glucosamine 1-phosphate = D-glucosamine 6-phosphate. In terms of biological role, catalyzes the conversion of glucosamine-6-phosphate to glucosamine-1-phosphate. This Campylobacter fetus subsp. fetus (strain 82-40) protein is Phosphoglucosamine mutase.